A 23-amino-acid polypeptide reads, in one-letter code: Basic phospholipase A2 Smb-N6 (23 aa).

The protein belongs to the phospholipase A2 family. Group II subfamily. Ca(2+) is required as a cofactor. In terms of processing, contains 7 disulfide bonds. Expressed by the venom gland.

The protein localises to the secreted. It catalyses the reaction a 1,2-diacyl-sn-glycero-3-phosphocholine + H2O = a 1-acyl-sn-glycero-3-phosphocholine + a fatty acid + H(+). Its function is as follows. Snake venom phospholipase A2 (PLA2) that shows myotoxic activities. PLA2 catalyzes the calcium-dependent hydrolysis of the 2-acyl groups in 3-sn-phosphoglycerides. This is Basic phospholipase A2 Smb-N6 from Sistrurus miliarius barbouri (Dusky pigmy rattlesnake).